A 152-amino-acid polypeptide reads, in one-letter code: Large ribosomal subunit protein uL13 (152 aa).

The protein belongs to the universal ribosomal protein uL13 family. As to quaternary structure, part of the 50S ribosomal subunit.

Functionally, this protein is one of the early assembly proteins of the 50S ribosomal subunit, although it is not seen to bind rRNA by itself. It is important during the early stages of 50S assembly. In Wolbachia sp. subsp. Drosophila simulans (strain wRi), this protein is Large ribosomal subunit protein uL13.